A 130-amino-acid chain; its full sequence is Cytochrome c oxidase subunit 13, mitochondrial (130 aa).

A mitochondrion-targeting transit peptide spans 1-31 (MSMMNRNIGFLSRTLKTSVPKRAGLLSFRAY). Residues 32 to 61 (SNEAKVNWLEEVQAEEEHAKRSSEFWKKVT) are Mitochondrial matrix-facing. A helical transmembrane segment spans residues 62–80 (YYIGGPALILASANAYYIY). The Mitochondrial intermembrane segment spans residues 81 to 130 (CKHQEHAKHVEDTDPGYSFENLRFKKYPWGDGSKTLFWNDKVNHLKKDDE).

This sequence belongs to the cytochrome c oxidase subunit 6A family. In terms of assembly, component of the cytochrome c oxidase (complex IV, CIV), a multisubunit enzyme composed of a catalytic core of 3 subunits and several supernumerary subunits. The complex exists as a monomer or a dimer and forms supercomplexes (SCs) in the inner mitochondrial membrane with ubiquinol-cytochrome c oxidoreductase (cytochrome b-c1 complex, complex III, CIII).

The protein localises to the mitochondrion inner membrane. It participates in energy metabolism; oxidative phosphorylation. In terms of biological role, component of the cytochrome c oxidase, the last enzyme in the mitochondrial electron transport chain which drives oxidative phosphorylation. The respiratory chain contains 3 multisubunit complexes succinate dehydrogenase (complex II, CII), ubiquinol-cytochrome c oxidoreductase (cytochrome b-c1 complex, complex III, CIII) and cytochrome c oxidase (complex IV, CIV), that cooperate to transfer electrons derived from NADH and succinate to molecular oxygen, creating an electrochemical gradient over the inner membrane that drives transmembrane transport and the ATP synthase. Cytochrome c oxidase is the component of the respiratory chain that catalyzes the reduction of oxygen to water. Electrons originating from reduced cytochrome c in the intermembrane space (IMS) are transferred via the dinuclear copper A center (CU(A)) of subunit 2 and heme A of subunit 1 to the active site in subunit 1, a binuclear center (BNC) formed by heme A3 and copper B (CU(B)). The BNC reduces molecular oxygen to 2 water molecules unsing 4 electrons from cytochrome c in the IMS and 4 protons from the mitochondrial matrix. The sequence is that of Cytochrome c oxidase subunit 13, mitochondrial (cox13) from Schizosaccharomyces pombe (strain 972 / ATCC 24843) (Fission yeast).